A 136-amino-acid polypeptide reads, in one-letter code: ATP synthase epsilon chain (136 aa).

The protein belongs to the ATPase epsilon chain family. As to quaternary structure, F-type ATPases have 2 components, CF(1) - the catalytic core - and CF(0) - the membrane proton channel. CF(1) has five subunits: alpha(3), beta(3), gamma(1), delta(1), epsilon(1). CF(0) has three main subunits: a, b and c.

Its subcellular location is the cell membrane. Produces ATP from ADP in the presence of a proton gradient across the membrane. The polypeptide is ATP synthase epsilon chain (Herpetosiphon aurantiacus (strain ATCC 23779 / DSM 785 / 114-95)).